The following is a 359-amino-acid chain: MISKLSVNPTFSPSYNIIVDSVLDFSHILEYVTNKQVLVVTNTTVAKLYLTKFLAALVDDLDVRTCILEDGEQYKSQQSLDKILSTLLENHFTRNSTVLVALGGGVIGDITGFAAAIYQRGIDFIQIPTTLLSQVDSSVGGKTAINHQLGKNMIGAFYQPKVVYTSIEFYKTLSQREYIAGMAEVVKYAFISKDFYLWLDSNRDKILAKDSVTLIEMVKRSCQIKAQVVAMDEKELTGARAILNFGHTFGHAIEKCQNYRGLKHGEAVGVGMAQAIDFSHYLGLISQQQAKDFNDFIVSFGISIDFPNDICQKEFLEAMLLDKKNSNKELKFILIENIGSLSLQKQSKNELEQFLDISR.

NAD(+)-binding positions include 70-75 (DGEQYK), 105-109 (GVIGD), 129-130 (TT), Lys142, Lys151, and 169-172 (FYKT). Residues Glu184, His247, and His264 each coordinate Zn(2+).

It belongs to the sugar phosphate cyclases superfamily. Dehydroquinate synthase family. The cofactor is Co(2+). Zn(2+) is required as a cofactor. Requires NAD(+) as cofactor.

Its subcellular location is the cytoplasm. The catalysed reaction is 7-phospho-2-dehydro-3-deoxy-D-arabino-heptonate = 3-dehydroquinate + phosphate. It participates in metabolic intermediate biosynthesis; chorismate biosynthesis; chorismate from D-erythrose 4-phosphate and phosphoenolpyruvate: step 2/7. Functionally, catalyzes the conversion of 3-deoxy-D-arabino-heptulosonate 7-phosphate (DAHP) to dehydroquinate (DHQ). This Francisella tularensis subsp. tularensis (strain WY96-3418) protein is 3-dehydroquinate synthase.